The primary structure comprises 379 residues: EP300-interacting inhibitor of differentiation 3 (379 aa).

Residues leucine 32–threonine 58 adopt a coiled-coil conformation.

It belongs to the NSE4 family. Component of the SMC5-SMC6 complex which consists at least of SMC5, SMC6, NSMCE2, NSMCE1, NSMCE4A or EID3 and NSMCE3. NSMCE1, NSMCE4A or EID3 and NSMCE3 probably form a subcomplex that bridges the head domains of the SMC5:SMC6 heterodimer. Homodimer, and heterodimer with EID2. Interacts with the C-terminal region of CREBBP.

It is found in the nucleus. It localises to the cytoplasm. The protein localises to the chromosome. Its subcellular location is the telomere. Tissue-specific component of the SMC5-SMC6 complex, a complex involved in repair of DNA double-strand breaks by homologous recombination. The complex may promote sister chromatid homologous recombination by recruiting the SMC1-SMC3 cohesin complex to double-strand breaks. The complex is required for telomere maintenance via recombination and mediates sumoylation of shelterin complex (telosome) components. In terms of biological role, acts as a repressor of nuclear receptor-dependent transcription possibly by interfering with CREBBP-dependent coactivation. May function as a coinhibitor of other CREBBP/EP300-dependent transcription factors. This Bos taurus (Bovine) protein is EP300-interacting inhibitor of differentiation 3.